Consider the following 89-residue polypeptide: Co-chaperonin GroES (89 aa).

Belongs to the GroES chaperonin family. As to quaternary structure, heptamer of 7 subunits arranged in a ring. Interacts with the chaperonin GroEL.

It is found in the cytoplasm. Together with the chaperonin GroEL, plays an essential role in assisting protein folding. The GroEL-GroES system forms a nano-cage that allows encapsulation of the non-native substrate proteins and provides a physical environment optimized to promote and accelerate protein folding. GroES binds to the apical surface of the GroEL ring, thereby capping the opening of the GroEL channel. In Wolinella succinogenes (strain ATCC 29543 / DSM 1740 / CCUG 13145 / JCM 31913 / LMG 7466 / NCTC 11488 / FDC 602W) (Vibrio succinogenes), this protein is Co-chaperonin GroES.